Consider the following 148-residue polypeptide: Deoxyuridine 5'-triphosphate nucleotidohydrolase (148 aa).

Substrate-binding positions include 68–70, Asn-81, 85–87, and Lys-95; these read RSG and TID.

It belongs to the dUTPase family. It depends on Mg(2+) as a cofactor.

It carries out the reaction dUTP + H2O = dUMP + diphosphate + H(+). It functions in the pathway pyrimidine metabolism; dUMP biosynthesis; dUMP from dCTP (dUTP route): step 2/2. Functionally, this enzyme is involved in nucleotide metabolism: it produces dUMP, the immediate precursor of thymidine nucleotides and it decreases the intracellular concentration of dUTP so that uracil cannot be incorporated into DNA. The chain is Deoxyuridine 5'-triphosphate nucleotidohydrolase from Rickettsia typhi (strain ATCC VR-144 / Wilmington).